The primary structure comprises 708 residues: Quinohemoprotein alcohol dehydrogenase (708 aa).

A signal peptide spans 1–31; that stretch reads MERLIDNSHGWPGRMVWLLAACLGSAAAFAQ. A pyrroloquinoline quinone-binding site is contributed by glutamate 101. A disulfide bridge connects residues cysteine 147 and cysteine 148. Pyrroloquinoline quinone contacts are provided by residues arginine 153, threonine 198, and 214-215; that span reads GA. Glutamate 216 serves as a coordination point for Ca(2+). Threonine 274 is a pyrroloquinoline quinone binding site. Positions 294 and 339 each coordinate Ca(2+). The Proton acceptor role is filled by aspartate 339. Pyrroloquinoline quinone contacts are provided by residues lysine 366, 425–426, and valine 575; that span reads NW. One can recognise a Cytochrome c domain in the interval 619 to 708; the sequence is YDPAKVEAGT…GTADAIRPKP (90 aa). Heme c-binding residues include cysteine 635, cysteine 638, histidine 639, and methionine 678.

It belongs to the bacterial PQQ dehydrogenase family. As to quaternary structure, monomer. It depends on pyrroloquinoline quinone as a cofactor. The cofactor is Ca(2+). Heme c serves as cofactor. In the crystallographic structures Trp-543 is oxidized to 2'-hydroxytryptophan.

Its subcellular location is the periplasm. The enzyme catalyses 2 oxidized [azurin] + a primary alcohol = 2 reduced [azurin] + an aldehyde + 2 H(+). Its function is as follows. Catalyzes the dye-linked oxidation of primary alcohols to the corresponding aldehydes and the (subsequent) oxidation of the aldehydes to carboxylic acids. Methanol is not a substrate. This is Quinohemoprotein alcohol dehydrogenase from Comamonas testosteroni (Pseudomonas testosteroni).